The primary structure comprises 477 residues: (R)-2-hydroxyglutaryl-CoA dehydratase, subunit alpha (477 aa).

Belongs to the FldB/FldC dehydratase alpha/beta subunit family. In terms of assembly, the (R)-2-hydroxyglutaryl-CoA dehydratase enzyme system is a heterodimer composed of an alpha subunit (HgdA) and a beta subunit (HgdB). [4Fe-4S] cluster is required as a cofactor. Requires FMN as cofactor. Mg(2+) serves as cofactor.

It is found in the cytoplasm. It carries out the reaction (R)-2-hydroxyglutaryl-CoA = (2E)-glutaconyl-CoA + H2O. The protein operates within amino-acid degradation; L-glutamate degradation via hydroxyglutarate pathway; crotonoyl-CoA from L-glutamate: step 4/5. With respect to regulation, activated by the HgdC. Reversibly inactivated by oxidants such as 2-nitrophenol, 3-nitrophenol, 4-nitrophenol, 4-nitrobenzoate, carbonyl cyanide 4-(trifluoromethoxy)phenylhydrazone (FCCP) and chloramphenicol. Irreversibly inactivated by oxidants such as hydroxylamine and nitrite. Functionally, involved in the fermentation of L-glutamate via the hydroxyglutarate pathway. Catalyzes the reversible syn-elimination of water from (R)-2-hydroxyglutaryl-CoA to yield (E)-glutaconyl-CoA. The dehydration mechanism involves a transient one electron reduction of the thioester from (R)-2-hydroxyglutaryl-CoA, generating a ketyl radical. Prior to (E)-glutaconyl-CoA formation, the ketyl radical is subsequently reoxidized by electron transfer back to the HgdA-HgdB complex (CompD) to avoid change in oxidation state of the substrate. The appropriate redox state of dehydratase HgdA-HgdB complex (CompD) is maintained by HgdC (CompA) via hydrolysis of ATP and ATP-dependent electron transfer. Since the electron is recycled, the dehydratase is able to perform several turnovers with only catalytic amounts of ATP and substoichiometric amounts of HgdC (CompA). The polypeptide is (R)-2-hydroxyglutaryl-CoA dehydratase, subunit alpha (Acidaminococcus fermentans (strain ATCC 25085 / DSM 20731 / CCUG 9996 / CIP 106432 / VR4)).